A 61-amino-acid chain; its full sequence is Small ribosomal subunit protein uS14 (61 aa).

Zn(2+)-binding residues include Cys24, Cys27, Cys40, and Cys43.

It belongs to the universal ribosomal protein uS14 family. Zinc-binding uS14 subfamily. Part of the 30S ribosomal subunit. Contacts proteins S3 and S10. Zn(2+) serves as cofactor.

Binds 16S rRNA, required for the assembly of 30S particles and may also be responsible for determining the conformation of the 16S rRNA at the A site. The chain is Small ribosomal subunit protein uS14 from Campylobacter concisus (strain 13826).